The primary structure comprises 971 residues: Translation initiation factor IF-2 (971 aa).

The span at 49–63 (HLRKSHGATDGDKRK) shows a compositional bias: basic and acidic residues. 2 disordered regions span residues 49–85 (HLRK…KART) and 99–386 (RDDV…PTEP). Over residues 105–114 (GAEQGQAQVA) the composition is skewed to low complexity. Residues 121 to 181 (ELKRREEEAR…EEEAAAKRAA (61 aa)) show a composition bias toward basic and acidic residues. The segment covering 182-200 (AEAAAAQQAAAQQAAAEQE) has biased composition (low complexity). Positions 209-260 (DEARAAAERAAQREAAKKAEDAAREAADKARAEQEEISKRRAAAEAEARAIR) are enriched in basic and acidic residues. Positions 303-325 (ARPAVKKPAGAAAPATTQAPAGA) are enriched in low complexity. The span at 355–368 (SSGGVDRGWRGGPK) shows a compositional bias: gly residues. One can recognise a tr-type G domain in the interval 471-640 (PRPPVVTVMG…LLQAEVLELK (170 aa)). A G1 region spans residues 480–487 (GHVDHGKT). 480-487 (GHVDHGKT) provides a ligand contact to GTP. Positions 505-509 (GITQH) are G2. The segment at 526 to 529 (DTPG) is G3. GTP is bound by residues 526–530 (DTPGH) and 580–583 (NKID). Residues 580 to 583 (NKID) form a G4 region. Residues 616 to 618 (SAK) form a G5 region.

Belongs to the TRAFAC class translation factor GTPase superfamily. Classic translation factor GTPase family. IF-2 subfamily.

It localises to the cytoplasm. In terms of biological role, one of the essential components for the initiation of protein synthesis. Protects formylmethionyl-tRNA from spontaneous hydrolysis and promotes its binding to the 30S ribosomal subunits. Also involved in the hydrolysis of GTP during the formation of the 70S ribosomal complex. This is Translation initiation factor IF-2 from Burkholderia cenocepacia (strain ATCC BAA-245 / DSM 16553 / LMG 16656 / NCTC 13227 / J2315 / CF5610) (Burkholderia cepacia (strain J2315)).